The primary structure comprises 413 residues: Alpha-1-antitrypsin 1-2 (413 aa).

The first 24 residues, 1–24 (MTPSISWGLLLLAGLCCMVPSFLA), serve as a signal peptide directing secretion. N-linked (GlcNAc...) asparagine glycans are attached at residues N64, N101, and N265. Residues 368-387 (AATVFEAVPMSMPPILRFDH) are RCL.

It belongs to the serpin family.

The protein resides in the secreted. Its function is as follows. Inhibitor of serine proteases. Its primary target is elastase, but it also has a moderate affinity for plasmin and thrombin. The sequence is that of Alpha-1-antitrypsin 1-2 (Serpina1b) from Mus musculus (Mouse).